The chain runs to 239 residues: Putative ABC transporter ATP-binding protein BR1368/BS1330_I1363 (239 aa).

An ABC transporter domain is found at 5-234; the sequence is LSLDRVSVSR…EQVHLHYVEA (230 aa). 37-44 serves as a coordination point for ATP; that stretch reads GDNGVGKT.

It belongs to the ABC transporter superfamily.

The protein localises to the cell inner membrane. In terms of biological role, probably part of an ABC transporter complex. Responsible for energy coupling to the transport system. This chain is Putative ABC transporter ATP-binding protein BR1368/BS1330_I1363, found in Brucella suis biovar 1 (strain 1330).